Reading from the N-terminus, the 632-residue chain is 1-deoxy-D-xylulose-5-phosphate synthase (632 aa).

Residues H78 and 119–121 (AHS) contribute to the thiamine diphosphate site. Mg(2+) is bound at residue D150. Thiamine diphosphate contacts are provided by residues 151–152 (GA), N179, Y286, and E368. N179 contacts Mg(2+).

This sequence belongs to the transketolase family. DXPS subfamily. Homodimer. Requires Mg(2+) as cofactor. It depends on thiamine diphosphate as a cofactor.

The catalysed reaction is D-glyceraldehyde 3-phosphate + pyruvate + H(+) = 1-deoxy-D-xylulose 5-phosphate + CO2. Its pathway is metabolic intermediate biosynthesis; 1-deoxy-D-xylulose 5-phosphate biosynthesis; 1-deoxy-D-xylulose 5-phosphate from D-glyceraldehyde 3-phosphate and pyruvate: step 1/1. In terms of biological role, catalyzes the acyloin condensation reaction between C atoms 2 and 3 of pyruvate and glyceraldehyde 3-phosphate to yield 1-deoxy-D-xylulose-5-phosphate (DXP). This chain is 1-deoxy-D-xylulose-5-phosphate synthase, found in Albidiferax ferrireducens (strain ATCC BAA-621 / DSM 15236 / T118) (Rhodoferax ferrireducens).